We begin with the raw amino-acid sequence, 176 residues long: Large ribosomal subunit protein uL6 (176 aa).

This sequence belongs to the universal ribosomal protein uL6 family. Part of the 50S ribosomal subunit.

In terms of biological role, this protein binds to the 23S rRNA, and is important in its secondary structure. It is located near the subunit interface in the base of the L7/L12 stalk, and near the tRNA binding site of the peptidyltransferase center. This chain is Large ribosomal subunit protein uL6, found in Lactobacillus acidophilus (strain ATCC 700396 / NCK56 / N2 / NCFM).